The chain runs to 79 residues: Exodeoxyribonuclease 7 small subunit (79 aa).

It belongs to the XseB family. As to quaternary structure, heterooligomer composed of large and small subunits.

It localises to the cytoplasm. The catalysed reaction is Exonucleolytic cleavage in either 5'- to 3'- or 3'- to 5'-direction to yield nucleoside 5'-phosphates.. Its function is as follows. Bidirectionally degrades single-stranded DNA into large acid-insoluble oligonucleotides, which are then degraded further into small acid-soluble oligonucleotides. This chain is Exodeoxyribonuclease 7 small subunit, found in Lactococcus lactis subsp. cremoris (strain SK11).